A 421-amino-acid polypeptide reads, in one-letter code: Phosphatidylinositol 5-phosphate 4-kinase type-2 gamma (421 aa).

Residue alanine 2 is modified to N-acetylalanine. Serine 26 carries the post-translational modification Phosphoserine. The region spanning 43–420 is the PIPK domain; the sequence is AADPLVGVFL…RFLDFITNIF (378 aa). The required for interaction with PIP5K1A stretch occupies residues 69–75; that stretch reads VMLLPDD. Serine 349 is modified (phosphoserine).

As to quaternary structure, interacts with PIP5K1A; the interaction inhibits PIP5K1A kinase activity. Post-translationally, phosphorylated, phosphorylation is induced by EGF.

It is found in the endoplasmic reticulum. Its subcellular location is the cytoplasm. The catalysed reaction is a 1,2-diacyl-sn-glycero-3-phospho-(1D-myo-inositol-5-phosphate) + ATP = a 1,2-diacyl-sn-glycero-3-phospho-(1D-myo-inositol-4,5-bisphosphate) + ADP + H(+). It catalyses the reaction 1,2-dihexadecanoyl-sn-glycero-3-phospho-(1D-myo-inositol-5-phosphate) + ATP = 1,2-dihexadecanoyl-sn-glycero-3-phospho-(1D-myo-inositol-4,5-bisphosphate) + ADP + H(+). The enzyme catalyses 1,2-dihexadecanoyl-sn-glycero-3-phospho-(1D-myo-inositol-5-phosphate) + GTP = 1,2-dihexadecanoyl-sn-glycero-3-phospho-(1D-myo-inositol-4,5-bisphosphate) + GDP + H(+). In terms of biological role, phosphatidylinositol 5-phosphate 4-kinase with low enzymatic activity. May be a GTP sensor, has higher GTP-dependent kinase activity than ATP-dependent kinase activity. PIP4Ks negatively regulate insulin signaling through a catalytic-independent mechanism. They interact with PIP5Ks and suppress PIP5K-mediated PtdIns(4,5)P2 synthesis and insulin-dependent conversion to PtdIns(3,4,5)P3. The sequence is that of Phosphatidylinositol 5-phosphate 4-kinase type-2 gamma from Homo sapiens (Human).